The chain runs to 30 residues: Fimbrial assembly protein, serogroup B1 (30 aa).

The polypeptide is Fimbrial assembly protein, serogroup B1 (fimB) (Dichelobacter nodosus (Bacteroides nodosus)).